A 141-amino-acid polypeptide reads, in one-letter code: Large ribosomal subunit protein uL16 (141 aa).

This sequence belongs to the universal ribosomal protein uL16 family. Part of the 50S ribosomal subunit.

In terms of biological role, binds 23S rRNA and is also seen to make contacts with the A and possibly P site tRNAs. This chain is Large ribosomal subunit protein uL16, found in Hydrogenobaculum sp. (strain Y04AAS1).